Reading from the N-terminus, the 261-residue chain is Carbonic anhydrase 1 (261 aa).

A disordered region spans residues 1-31; sequence MASPDWGYDDKNGPEQWSKLYPIANGNNQSP. An N-acetylalanine modification is found at Ala-2. The Alpha-carbonic anhydrase domain maps to 4–261; it reads PDWGYDDKNG…LKGRTVRASF (258 aa). Residue His-65 is the Proton donor/acceptor of the active site. The Zn(2+) site is built by His-95, His-97, and His-120. Residues Thr-200 and 200–201 contribute to the substrate site; that span reads TH. The segment at 240–261 is disordered; that stretch reads VPMQHNNRPTQPLKGRTVRASF.

The protein belongs to the alpha-carbonic anhydrase family. It depends on Zn(2+) as a cofactor.

It is found in the cytoplasm. It carries out the reaction hydrogencarbonate + H(+) = CO2 + H2O. The enzyme catalyses urea = cyanamide + H2O. Its activity is regulated as follows. Inhibited by acetazolamide. Its function is as follows. Catalyzes the reversible hydration of carbon dioxide. Can hydrate cyanamide to urea. This Gorilla gorilla gorilla (Western lowland gorilla) protein is Carbonic anhydrase 1 (CA1).